The sequence spans 334 residues: Phosphate acyltransferase (334 aa).

Belongs to the PlsX family. Homodimer. Probably interacts with PlsY.

The protein localises to the cytoplasm. It catalyses the reaction a fatty acyl-[ACP] + phosphate = an acyl phosphate + holo-[ACP]. The protein operates within lipid metabolism; phospholipid metabolism. Functionally, catalyzes the reversible formation of acyl-phosphate (acyl-PO(4)) from acyl-[acyl-carrier-protein] (acyl-ACP). This enzyme utilizes acyl-ACP as fatty acyl donor, but not acyl-CoA. This chain is Phosphate acyltransferase, found in Fervidobacterium nodosum (strain ATCC 35602 / DSM 5306 / Rt17-B1).